Reading from the N-terminus, the 255-residue chain is Glioma pathogenesis-related protein 1 (255 aa).

Positions 1–17 (MQVILAVIVWMASSVSS) are cleaved as a signal peptide. The SCP domain occupies 39–164 (QVHNQLRSKV…PNGANFICDY (126 aa)). A helical membrane pass occupies residues 224-244 (SLFLIAKSVLLLLSVIITIWV).

This sequence belongs to the CRISP family.

The protein resides in the membrane. In Mus musculus (Mouse), this protein is Glioma pathogenesis-related protein 1 (Glipr1).